Here is a 242-residue protein sequence, read N- to C-terminus: Peptidyl-prolyl cis-trans isomerase FKBP20-2, chloroplastic (242 aa).

The N-terminal 31 residues, 1–31 (MVTILSTPLSPRLTFLCETKLSLSRSNRSVC), are a transit peptide targeting the chloroplast. A thylakoid-targeting transit peptide spans 32-67 (CSLSEEPKDQCLSRRSLVYVLVASPCLLLPALSSSA). Residues 138 to 225 (GQQVTFHYIG…VFDVELLSIQ (88 aa)) form the PPIase FKBP-type domain. C227 and C241 are oxidised to a cystine.

The protein belongs to the FKBP-type PPIase family. As to quaternary structure, interacts in vitro with LTO1.

The protein localises to the plastid. Its subcellular location is the chloroplast thylakoid lumen. The enzyme catalyses [protein]-peptidylproline (omega=180) = [protein]-peptidylproline (omega=0). PPIases accelerate the folding of proteins. It catalyzes the cis-trans isomerization of proline imidic peptide bonds in oligopeptides. Involved in the accumulation of the PSII complex. This is Peptidyl-prolyl cis-trans isomerase FKBP20-2, chloroplastic from Arabidopsis thaliana (Mouse-ear cress).